A 272-amino-acid polypeptide reads, in one-letter code: NH(3)-dependent NAD(+) synthetase (272 aa).

Residue 45-52 (GISGGQDS) coordinates ATP. Asp51 serves as a coordination point for Mg(2+). Arg138 contacts deamido-NAD(+). Thr158 is a binding site for ATP. Position 163 (Glu163) interacts with Mg(2+). Deamido-NAD(+)-binding residues include Lys171 and Asp178. Residues Lys187 and Thr209 each coordinate ATP. 258-259 (HK) is a binding site for deamido-NAD(+).

The protein belongs to the NAD synthetase family. In terms of assembly, homodimer.

The enzyme catalyses deamido-NAD(+) + NH4(+) + ATP = AMP + diphosphate + NAD(+) + H(+). It participates in cofactor biosynthesis; NAD(+) biosynthesis; NAD(+) from deamido-NAD(+) (ammonia route): step 1/1. Catalyzes the ATP-dependent amidation of deamido-NAD to form NAD. Uses ammonia as a nitrogen source. This chain is NH(3)-dependent NAD(+) synthetase, found in Bacillus cereus (strain AH187).